The sequence spans 561 residues: Arginine--tRNA ligase (561 aa).

Residues 128–138 (ANPTGPLHVGH) carry the 'HIGH' region motif.

This sequence belongs to the class-I aminoacyl-tRNA synthetase family. As to quaternary structure, monomer.

The protein localises to the cytoplasm. The catalysed reaction is tRNA(Arg) + L-arginine + ATP = L-arginyl-tRNA(Arg) + AMP + diphosphate. This chain is Arginine--tRNA ligase, found in Marinobacter nauticus (strain ATCC 700491 / DSM 11845 / VT8) (Marinobacter aquaeolei).